A 217-amino-acid chain; its full sequence is 3,4-dihydroxy-2-butanone 4-phosphate synthase (217 aa).

D-ribulose 5-phosphate-binding positions include 37–38, Asp42, 150–154, and Glu174; these read RE and RRGHT. Glu38 contacts Mg(2+). His153 lines the Mg(2+) pocket.

It belongs to the DHBP synthase family. As to quaternary structure, homodimer. Requires Mg(2+) as cofactor. Mn(2+) is required as a cofactor.

The enzyme catalyses D-ribulose 5-phosphate = (2S)-2-hydroxy-3-oxobutyl phosphate + formate + H(+). Its pathway is cofactor biosynthesis; riboflavin biosynthesis; 2-hydroxy-3-oxobutyl phosphate from D-ribulose 5-phosphate: step 1/1. Catalyzes the conversion of D-ribulose 5-phosphate to formate and 3,4-dihydroxy-2-butanone 4-phosphate. This chain is 3,4-dihydroxy-2-butanone 4-phosphate synthase, found in Shewanella putrefaciens (strain CN-32 / ATCC BAA-453).